The primary structure comprises 234 residues: Serum amyloid P-component (234 aa).

An N-terminal signal peptide occupies residues 1-22 (MDKLLSLLGVSILAGLLLEAFA). Positions 27 to 226 (TGKVFVFPRQ…YAVIRPRCVA (200 aa)) constitute a Pentraxin (PTX) domain. An N-linked (GlcNAc...) asparagine glycan is attached at Asn54. A disulfide bridge connects residues Cys58 and Cys117. Asn81, Glu158, Gln159, Asp160, and Gln170 together coordinate Ca(2+).

It belongs to the pentraxin family. In terms of assembly, homopentamer. Pentraxin (or pentaxin) have a discoid arrangement of 5 non-covalently bound subunits. The cofactor is Ca(2+).

The protein resides in the secreted. This Mesocricetus auratus (Golden hamster) protein is Serum amyloid P-component (APCS).